Reading from the N-terminus, the 198-residue chain is MSTAVQVDDVMRYRDSRFQTIAAKLLPTQYLVVDDDTALTTTLGSCVAACLRDPVLKIGGMNHFLLPEGQVGDGAPTRYGSYAMELLINDMLKRGAHRKRIEAKVFGGANVLKGFTSNPVGTRNAEFVRQYLQAEHIPIIAEDLCGIHPRKVWFFATTGRVVVQRLPHAHEAEVAATESAVRARLSKAPVTGGVELFE.

Belongs to the CheD family.

The catalysed reaction is L-glutaminyl-[protein] + H2O = L-glutamyl-[protein] + NH4(+). Its function is as follows. Probably deamidates glutamine residues to glutamate on methyl-accepting chemotaxis receptors (MCPs), playing an important role in chemotaxis. The polypeptide is Probable chemoreceptor glutamine deamidase CheD (Xanthomonas axonopodis pv. citri (strain 306)).